Reading from the N-terminus, the 461-residue chain is Photosystem II CP43 reaction center protein (461 aa).

Residues 1–2 (ME) constitute a propeptide that is removed on maturation. Thr3 is subject to N-acetylthreonine. Thr3 carries the phosphothreonine modification. A run of 5 helical transmembrane segments spans residues 57–81 (LFEV…PHLA), 122–143 (LIGP…KDKN), 166–188 (KAMY…RVIT), 243–263 (KPFA…LSYS), and 279–300 (WFNN…ASQA). Glu355 serves as a coordination point for [CaMn4O5] cluster. The helical transmembrane segment at 435–459 (RARAAAAGFEKGIERETEPALSMKP) threads the bilayer.

This sequence belongs to the PsbB/PsbC family. PsbC subfamily. PSII is composed of 1 copy each of membrane proteins PsbA, PsbB, PsbC, PsbD, PsbE, PsbF, PsbH, PsbI, PsbJ, PsbK, PsbL, PsbM, PsbT, PsbX, PsbY, PsbZ, Psb30/Ycf12, at least 3 peripheral proteins of the oxygen-evolving complex and a large number of cofactors. It forms dimeric complexes. Binds multiple chlorophylls and provides some of the ligands for the Ca-4Mn-5O cluster of the oxygen-evolving complex. It may also provide a ligand for a Cl- that is required for oxygen evolution. PSII binds additional chlorophylls, carotenoids and specific lipids. serves as cofactor.

It is found in the plastid. The protein localises to the chloroplast thylakoid membrane. Its function is as follows. One of the components of the core complex of photosystem II (PSII). It binds chlorophyll and helps catalyze the primary light-induced photochemical processes of PSII. PSII is a light-driven water:plastoquinone oxidoreductase, using light energy to abstract electrons from H(2)O, generating O(2) and a proton gradient subsequently used for ATP formation. The chain is Photosystem II CP43 reaction center protein from Chlorokybus atmophyticus (Soil alga).